The following is a 346-amino-acid chain: F(420)H(2) dehydrogenase subunit H (346 aa).

A run of 8 helical transmembrane segments spans residues 18–38 (GIVG…AVWL), 91–111 (IFML…AVFI), 125–145 (ISVL…FMVA), 170–190 (PLGI…IVDI), 196–216 (LHWN…SLMA), 257–277 (ILGS…PGFI), 284–304 (GIIV…MVII), and 326–346 (LLPL…YLGA).

This sequence belongs to the complex I subunit 1 family. In terms of assembly, the FPO complex is composed of at least 13 different subunits. FpoA, FpoH, FpoJ, FpoK, FpoL, FpoM and FpoN proteins constitute the membrane sector of the complex.

The protein resides in the cell membrane. The enzyme catalyses methanophenazine + reduced coenzyme F420-(gamma-L-Glu)(n) = dihydromethanophenazine + oxidized coenzyme F420-(gamma-L-Glu)(n) + H(+). In terms of biological role, component of the F(420)H(2) dehydrogenase (FPO complex) which is part of the energy-conserving F(420)H(2):heterodisulfide oxidoreductase system. The membrane-bound electron transfer system of the complex plays an important role in the metabolism of methylotrophic methanogens when the organisms grow on methanol or methylamines. Catalyzes the oxidation of methanophenazine to dihydromethanophenazine. It shuttles electrons from F(420)H(2), via FAD and iron-sulfur (Fe-S) centers, to methanophenazine (an electron carrier in the membrane). It couples the redox reaction to proton translocation (for every two electrons transferred, two hydrogen ions are translocated across the cytoplasmic membrane), and thus conserves the redox energy in a proton gradient. The chain is F(420)H(2) dehydrogenase subunit H from Methanosarcina barkeri (strain Fusaro / DSM 804).